The primary structure comprises 237 residues: Ubiquinone/menaquinone biosynthesis C-methyltransferase UbiE (237 aa).

2 residues coordinate S-adenosyl-L-methionine: Thr-60 and Asp-80.

This sequence belongs to the class I-like SAM-binding methyltransferase superfamily. MenG/UbiE family.

It catalyses the reaction a 2-demethylmenaquinol + S-adenosyl-L-methionine = a menaquinol + S-adenosyl-L-homocysteine + H(+). The enzyme catalyses a 2-methoxy-6-(all-trans-polyprenyl)benzene-1,4-diol + S-adenosyl-L-methionine = a 5-methoxy-2-methyl-3-(all-trans-polyprenyl)benzene-1,4-diol + S-adenosyl-L-homocysteine + H(+). It functions in the pathway quinol/quinone metabolism; menaquinone biosynthesis; menaquinol from 1,4-dihydroxy-2-naphthoate: step 2/2. Its pathway is cofactor biosynthesis; ubiquinone biosynthesis. Functionally, methyltransferase required for the conversion of demethylmenaquinol (DMKH2) to menaquinol (MKH2) and the conversion of 2-polyprenyl-6-methoxy-1,4-benzoquinol (DDMQH2) to 2-polyprenyl-3-methyl-6-methoxy-1,4-benzoquinol (DMQH2). The sequence is that of Ubiquinone/menaquinone biosynthesis C-methyltransferase UbiE from Syntrophotalea carbinolica (strain DSM 2380 / NBRC 103641 / GraBd1) (Pelobacter carbinolicus).